Here is a 426-residue protein sequence, read N- to C-terminus: Enolase (426 aa).

Gln-162 serves as a coordination point for (2R)-2-phosphoglycerate. The active-site Proton donor is the Glu-204. Residues Asp-241, Glu-286, and Asp-313 each coordinate Mg(2+). The (2R)-2-phosphoglycerate site is built by Lys-338, Arg-367, Ser-368, and Lys-389. Residue Lys-338 is the Proton acceptor of the active site.

This sequence belongs to the enolase family. Mg(2+) serves as cofactor.

Its subcellular location is the cytoplasm. It localises to the secreted. It is found in the cell surface. It carries out the reaction (2R)-2-phosphoglycerate = phosphoenolpyruvate + H2O. It participates in carbohydrate degradation; glycolysis; pyruvate from D-glyceraldehyde 3-phosphate: step 4/5. In terms of biological role, catalyzes the reversible conversion of 2-phosphoglycerate (2-PG) into phosphoenolpyruvate (PEP). It is essential for the degradation of carbohydrates via glycolysis. The sequence is that of Enolase from Aliarcobacter butzleri (strain RM4018) (Arcobacter butzleri).